The sequence spans 65 residues: Beta-toxin Am IT (65 aa).

Glu-1 carries the post-translational modification Pyrrolidone carboxylic acid (Glu); partial. The region spanning 1 to 64 (EHGYLLDKYT…LWNYKTNKCK (64 aa)) is the LCN-type CS-alpha/beta domain. Cystine bridges form between Cys-12–Cys-63, Cys-16–Cys-38, Cys-23–Cys-45, and Cys-27–Cys-47. Ser-65 carries the post-translational modification Serine amide.

The protein belongs to the long (4 C-C) scorpion toxin superfamily. Sodium channel inhibitor family. In terms of tissue distribution, expressed by the venom gland.

Its subcellular location is the secreted. In terms of biological role, has a toxic effect on insects and mammals. On German cockroach larvae, it provokes contraction, paralysis and lethality. Intracerebroventricular injection into mice causes severe neurotoxic symptoms. It fully competes with the binding of the iodinated Css4 (AC P60266) on rat brain synaptosomes, with moderate affinity and in a concentration-dependent manner (EC(50)=25 nM). It may act on both site 3 and site 4 of voltage-gated sodium channels. This chain is Beta-toxin Am IT, found in Androctonus mauritanicus mauritanicus (Scorpion).